We begin with the raw amino-acid sequence, 172 residues long: L-amino acid oxidase (172 aa).

Residue 44-47 coordinates FAD; the sequence is GPMR. The substrate site is built by Arg-47 and His-103.

The protein belongs to the flavin monoamine oxidase family. FIG1 subfamily. As to quaternary structure, heterodimer; non-covalently linked. Requires FAD as cofactor. N-glycosylated. Expressed by the venom gland.

Its subcellular location is the secreted. The catalysed reaction is an L-alpha-amino acid + O2 + H2O = a 2-oxocarboxylate + H2O2 + NH4(+). It catalyses the reaction L-leucine + O2 + H2O = 4-methyl-2-oxopentanoate + H2O2 + NH4(+). It carries out the reaction L-phenylalanine + O2 + H2O = 3-phenylpyruvate + H2O2 + NH4(+). The enzyme catalyses L-tryptophan + O2 + H2O = indole-3-pyruvate + H2O2 + NH4(+). The catalysed reaction is L-methionine + O2 + H2O = 4-methylsulfanyl-2-oxobutanoate + H2O2 + NH4(+). It catalyses the reaction L-isoleucine + O2 + H2O = (S)-3-methyl-2-oxopentanoate + H2O2 + NH4(+). It carries out the reaction L-arginine + O2 + H2O = 5-guanidino-2-oxopentanoate + H2O2 + NH4(+). The enzyme catalyses L-tyrosine + O2 + H2O = 3-(4-hydroxyphenyl)pyruvate + H2O2 + NH4(+). Its activity is regulated as follows. Activity is increased by Mn(2+) ions. Inhibited by Zn(2+), Ni(2+), Co(2+), Cu(2+) and Al(3+). No significant activity change by Na(+), K(+), Ca(2+), Mg(2+) and Ba(2+) ions. Both isoform are completely inhibited by L-Cys and reduced glutathione. O-phenanthroline, beta-mercaptoethanol and PMSF completely inhibit the enzymatic activity of LAAOII, but have no activity on LAAOI. Iodoacetic acid inhibits the enzymatic activity of LAAOII by 46% but has no effect on the LAAOI activity. Its function is as follows. Catalyzes an oxidative deamination of predominantly hydrophobic and aromatic L-amino acids, thus producing hydrogen peroxide that may contribute to the diverse toxic effects of this enzyme. Shows high specificity for L-Arg, L-Met, L-Phe, L-Leu, L-Tyr, L-Ile and L-Trp, low specificity for L-Val, L-Ala, L-Asn, L-Gln, and no specificity for L-Pro, L-Ser, L-Thr, L-Cys, L-Gly and L-Asp. Exhibits diverse biological activities, such as hemorrhage, hemolysis, edema, antibacterial and antiparasitic activities, as well as regulation of platelet aggregation. Its effect on platelets is controversial, since it either induces aggregation or inhibits agonist-induced aggregation. These different effects are probably due to different experimental conditions. This Cerastes cerastes (Horned desert viper) protein is L-amino acid oxidase.